Reading from the N-terminus, the 419-residue chain is Gamma-glutamyl phosphate reductase (419 aa).

This sequence belongs to the gamma-glutamyl phosphate reductase family.

The protein resides in the cytoplasm. It carries out the reaction L-glutamate 5-semialdehyde + phosphate + NADP(+) = L-glutamyl 5-phosphate + NADPH + H(+). The protein operates within amino-acid biosynthesis; L-proline biosynthesis; L-glutamate 5-semialdehyde from L-glutamate: step 2/2. Catalyzes the NADPH-dependent reduction of L-glutamate 5-phosphate into L-glutamate 5-semialdehyde and phosphate. The product spontaneously undergoes cyclization to form 1-pyrroline-5-carboxylate. In Ruthia magnifica subsp. Calyptogena magnifica, this protein is Gamma-glutamyl phosphate reductase.